The chain runs to 428 residues: Histidine--tRNA ligase (428 aa).

It belongs to the class-II aminoacyl-tRNA synthetase family. As to quaternary structure, homodimer.

It is found in the cytoplasm. It carries out the reaction tRNA(His) + L-histidine + ATP = L-histidyl-tRNA(His) + AMP + diphosphate + H(+). The polypeptide is Histidine--tRNA ligase (Pseudomonas entomophila (strain L48)).